The primary structure comprises 614 residues: Inactive leucine-rich repeat receptor-like serine/threonine-protein kinase At5g24100 (614 aa).

A signal peptide spans 1–21 (MSRGRSFIFYFVLFLFFGSSA). The Extracellular portion of the chain corresponds to 22-251 (LYSQVTGDLA…KNGIYISEPA (230 aa)). N-linked (GlcNAc...) asparagine glycosylation is present at N53. LRR repeat units lie at residues 71–95 (GTRV…TISR), 96–120 (LSEL…FLQL), 121–146 (KKLK…TWTN), 148–167 (TVLD…GFAN), 168–190 (LTGL…DLNL), and 191–214 (PGLR…LKRF). 3 N-linked (GlcNAc...) asparagine glycosylation sites follow: N146, N158, and N167. 2 N-linked (GlcNAc...) asparagine glycosylation sites follow: N197 and N202. Residues 252–272 (ILGIAISVCFVIFFVIAVVII) form a helical membrane-spanning segment. At 273 to 614 (VCYVKRQRKS…VETLEEIERD (342 aa)) the chain is on the cytoplasmic side. In terms of domain architecture, Protein kinase spans 341 to 611 (IASAEFLGKG…VKVVETLEEI (271 aa)). S343 carries the post-translational modification Phosphoserine. ATP-binding positions include 347–355 (LGKGVFGMT) and K369. Residue S420 is modified to Phosphoserine. A phosphothreonine mark is found at T441, T514, and T591. The LRR 7 repeat unit spans residues 578 to 601 (AKLLQMLQLGTSCTAMVPAKRPDM).

This sequence belongs to the protein kinase superfamily. Ser/Thr protein kinase family.

Its subcellular location is the cell membrane. The polypeptide is Inactive leucine-rich repeat receptor-like serine/threonine-protein kinase At5g24100 (Arabidopsis thaliana (Mouse-ear cress)).